Consider the following 408-residue polypeptide: Arginine biosynthesis bifunctional protein ArgJ (408 aa).

Substrate contacts are provided by Thr-156, Lys-182, Thr-193, Glu-279, Asn-403, and Thr-408. Residue Thr-193 is the Nucleophile of the active site.

Belongs to the ArgJ family. As to quaternary structure, heterotetramer of two alpha and two beta chains.

The protein resides in the cytoplasm. The enzyme catalyses N(2)-acetyl-L-ornithine + L-glutamate = N-acetyl-L-glutamate + L-ornithine. It catalyses the reaction L-glutamate + acetyl-CoA = N-acetyl-L-glutamate + CoA + H(+). The protein operates within amino-acid biosynthesis; L-arginine biosynthesis; L-ornithine and N-acetyl-L-glutamate from L-glutamate and N(2)-acetyl-L-ornithine (cyclic): step 1/1. It functions in the pathway amino-acid biosynthesis; L-arginine biosynthesis; N(2)-acetyl-L-ornithine from L-glutamate: step 1/4. Catalyzes two activities which are involved in the cyclic version of arginine biosynthesis: the synthesis of N-acetylglutamate from glutamate and acetyl-CoA as the acetyl donor, and of ornithine by transacetylation between N(2)-acetylornithine and glutamate. The sequence is that of Arginine biosynthesis bifunctional protein ArgJ from Methylococcus capsulatus (strain ATCC 33009 / NCIMB 11132 / Bath).